The primary structure comprises 1484 residues: MCPEEGGAAGLGELRSWWEVPAIAHFCSLFRTAFRLPDFEIEELEAALHRDDVEFISDLIACLLQGCYQRRDITPQTFHSYLEDIINYRWELEEGKPNPLREASFQDLPLRTRVEILHRLCDYRLDADDVFDLLKGLDADSLRVEPLGEDNSGALYWYFYGTRMYKEDPVQGKSNGELSLSRESEGQKNVSSIPGKTGKRRGRPPKRKKLQEEILLSEKQEENSLASEPQTRHGSQGPGQGTWWLLCQTEEEWRQVTESFRERTSLRERQLYKLLSEDFLPEICNMIAQKGKRPQRTKAELHPRWMSDHLSIKPVKQEETPVLTRIEKQKRKEEEEERQILLAVQKKEQEQMLKEERKRELEEKVKAVEGMCSVRVVWRGACLSTSRPVDRAKRRKLREERAWLLAQGKELPPELSHLDPNSPMREEKKTKDLFELDDDFTAMYKVLDVVKAHKDSWPFLEPVDESYAPNYYQIIKAPMDISSMEKKLNGGLYCTKEEFVNDMKTMFRNCRKYNGESSEYTKMSDNLERCFHRAMMKHFPGEDGDTDEEFWIREDEKREKRRSRAGRSGGSHVWTRSRDPEGSSRKQQPMENGGKSLPPTRRAPSSGDDQSSSSTQPPREVGTSNGRGFSHPLHCGGTPSQAPFLNQMRPAVPGTFGPLRGSDPATLYGSSGVPEPHPGEPVQQRQPFTMQPPVGINSLRGPRLGTPEEKQMCGGLTHLSNMGPHPGSLQLGQISGPSQDGSMYAPAQFQPGFIPPRHGGAPARPPDFPESSEIPPSHMYRSYKYLNRVHSAVWNGNHGATNQGPLGPDEKPHLGPGPSHQPRTLGHVMDSRVMRPPVPPNQWTEQSGFLPHGVPSSGYMRPPCKSAGHRLQPPPVPAPSSLFGAPAQALRGVQGGDSMMDSPEMIAMQQLSSRVCPPGVPYHPHQPAHPRLPGPFPQVAHPMSVTVSAPKPALGNPGRAPENSEAQEPENDQAEPLPGLEEKPPGVGTSEGVYLTQLPHPTPPLQTDCTRQSSPQERETVGPELKSSSSESADNCKAMKGKNPWPSDSSYPGPAAQGCVRDLSTVADRGALSENGVIGEASPCGSEGKGLGSSGSEKLLCPRGRTLQETMPCTGQNAATPPSTDPGLTGGTVSQFPPLYMPGLEYPNSAAHYHISPGLQGVGPVMGGKSPASHPQHFPPRGFQSNHPHSGGFPRYRPPQGMRYSYHPPPQPSYHHYQRTPYYACPQSFSDWQRPLHPQGSPSGPPASQPPPPRSLFSDKNAMASLQGCETLNAALTSPTRMDAVAAKVPNDGQNPGPEEEKLDESMERPESPKEFLDLDNHNAATKRQSSLSASEYLYGTPPPLSSGMGFGSSAFPPHSVMLQTGPPYTPQRPASHFQPRAYSSPVAALPPHHPGATQPNGLSQEGPIYRCQEEGLGHFQAVMMEQIGTRSGIRGPFQEMYRPSGMQMHPVQSQASFPKTPTAATSQEEVPPHKPPTLPLDQS.

The disordered stretch occupies residues 170–241 (VQGKSNGELS…RHGSQGPGQG (72 aa)). The span at 197-209 (TGKRRGRPPKRKK) shows a compositional bias: basic residues. The span at 210–222 (LQEEILLSEKQEE) shows a compositional bias: basic and acidic residues. Positions 223-234 (NSLASEPQTRHG) are enriched in polar residues. Phosphoserine is present on S422. One can recognise a Bromo domain in the interval 434–538 (FELDDDFTAM…RCFHRAMMKH (105 aa)). The residue at position 546 (T546) is a Phosphothreonine. 6 disordered regions span residues 556–704 (EKRE…GPRL), 796–825 (GNHG…PRTL), 919–1053 (GVPY…SYPG), 1165–1259 (VMGG…LFSD), 1287–1320 (AKVP…LDLD), and 1442–1484 (YRPS…LDQS). S571 is subject to Phosphoserine. The segment covering 605–614 (SSGDDQSSSS) has biased composition (low complexity). S1014 is modified (phosphoserine). R1197 and R1203 each carry asymmetric dimethylarginine. The segment covering 1243–1254 (SGPPASQPPPPR) has biased composition (pro residues). Residues 1304–1320 (DESMERPESPKEFLDLD) show a composition bias toward basic and acidic residues. S1312 carries the post-translational modification Phosphoserine. Residues 1451-1469 (PVQSQASFPKTPTAATSQE) show a composition bias toward polar residues. Over residues 1474-1484 (HKPPTLPLDQS) the composition is skewed to pro residues.

As to quaternary structure, component of the CERF-1 ISWI chromatin remodeling complex (also called the CECR2-containing remodeling factor (CERF) complex) at least composed of CECR2 and SMARCA1. Component of the CERF-5 ISWI chromatin remodeling complex at least composed of SMARCA5/SNF2H and CECR2. LUZP1 is detected as part of the CERF-1 and CERF-5 complexes in embryonic stem (ES) cells where it is involved in complex stabilization but is not detected in the complexes in the testis. Interacts with CCAR2; CCAR2 may form part of the CERF-1 and/or CEF-5 ISWI chromatin remodeling complexes in ES cells. Interacts with acetylated lysine residues on histone H2A and H3 (in vitro). Interacts with LRPPRC. Highly expressed in skeletal muscle, thymus, placenta and lung. Expressed at lower level in brain, heart, colon, spleen, kidney.

The protein resides in the nucleus. Regulatory subunit of the ATP-dependent CERF-1 and CERF-5 ISWI chromatin remodeling complexes, which form ordered nucleosome arrays on chromatin and facilitate access to DNA during DNA-templated processes such as DNA replication, transcription, and repair. The complexes do not have the ability to slide mononucleosomes to the center of a DNA template. The CERF-1 ISWI chromatin remodeling complex has a lower ATP hydrolysis rate than the CERF-5 ISWI chromatin remodeling complex. Plays a role in various processes during development: required during embryogenesis for neural tube closure and inner ear development. In adults, required for spermatogenesis, via the formation of ISWI-type chromatin complexes. In histone-modifying complexes, CECR2 recognizes and binds acylated histones: binds histones that are acetylated and/or butyrylated. May also be involved through its interaction with LRPPRC in the integration of cytoskeletal network with vesicular trafficking, nucleocytosolic shuttling, transcription, chromosome remodeling and cytokinesis. The protein is Chromatin remodeling regulator CECR2 (CECR2) of Homo sapiens (Human).